The primary structure comprises 231 residues: 2-C-methyl-D-erythritol 2,4-cyclodiphosphate synthase, chloroplastic (231 aa).

A chloroplast-targeting transit peptide spans 1-52 (MATSSTQLLLSSSSLFHSQITKKPFLLPATKIGVWRPKKSLSLSCRPSASVS). Residues Asp82 and His84 each contribute to the a divalent metal cation site. Substrate-binding positions include 82-84 (DLH), 108-109 (HS), 112-120 (DVLLHCVVD), 130-132 (DIG), 135-139 (FPDSD), Asp139, 174-180 (LQRPKIS), and 205-209 (AKTHE). His116 contributes to the a divalent metal cation binding site.

The protein belongs to the IspF family. Homotrimer. It depends on a divalent metal cation as a cofactor.

The protein resides in the plastid. The protein localises to the chloroplast stroma. It carries out the reaction 4-CDP-2-C-methyl-D-erythritol 2-phosphate = 2-C-methyl-D-erythritol 2,4-cyclic diphosphate + CMP. Its pathway is isoprenoid biosynthesis; isopentenyl diphosphate biosynthesis via DXP pathway; isopentenyl diphosphate from 1-deoxy-D-xylulose 5-phosphate: step 4/6. In terms of biological role, enzyme of the plastid non-mevalonate pathway for isoprenoid biosynthesis that converts 4-diphosphocytidyl-2C-methyl-D-erythritol 2-phosphate into 2C-methyl-D-erythritol 2,4-cyclodiphosphate and CMP. Is essential for chloroplast development. This chain is 2-C-methyl-D-erythritol 2,4-cyclodiphosphate synthase, chloroplastic, found in Arabidopsis thaliana (Mouse-ear cress).